A 392-amino-acid chain; its full sequence is Putative glutamate--cysteine ligase 2 (392 aa).

The segment at 1–21 (MMPVSGWRAVSSAPASSSAGR) is disordered. A compositionally biased stretch (low complexity) spans 9–19 (AVSSAPASSSA).

This sequence belongs to the glutamate--cysteine ligase type 2 family. YbdK subfamily.

The enzyme catalyses L-cysteine + L-glutamate + ATP = gamma-L-glutamyl-L-cysteine + ADP + phosphate + H(+). In terms of biological role, ATP-dependent carboxylate-amine ligase which exhibits weak glutamate--cysteine ligase activity. The sequence is that of Putative glutamate--cysteine ligase 2 from Mycobacterium ulcerans (strain Agy99).